Consider the following 730-residue polypeptide: Elongation factor 2 (730 aa).

In terms of domain architecture, tr-type G spans 19-260 (KFIRNIGIVA…MVVKHLPDPF (242 aa)). Residues 28 to 35 (AHIDHGKT), 94 to 98 (DTPGH), and 148 to 151 (NKVD) each bind GTP. His-597 carries the post-translational modification Diphthamide.

The protein belongs to the TRAFAC class translation factor GTPase superfamily. Classic translation factor GTPase family. EF-G/EF-2 subfamily.

It localises to the cytoplasm. Its function is as follows. Catalyzes the GTP-dependent ribosomal translocation step during translation elongation. During this step, the ribosome changes from the pre-translocational (PRE) to the post-translocational (POST) state as the newly formed A-site-bound peptidyl-tRNA and P-site-bound deacylated tRNA move to the P and E sites, respectively. Catalyzes the coordinated movement of the two tRNA molecules, the mRNA and conformational changes in the ribosome. The protein is Elongation factor 2 of Methanosphaerula palustris (strain ATCC BAA-1556 / DSM 19958 / E1-9c).